A 390-amino-acid polypeptide reads, in one-letter code: Phosphoglycerate kinase (390 aa).

Substrate is bound by residues aspartate 21 to asparagine 23, arginine 36, histidine 59 to arginine 62, arginine 114, and arginine 147. ATP is bound by residues lysine 198, glutamate 314, and glycine 340 to threonine 343.

Belongs to the phosphoglycerate kinase family. As to quaternary structure, monomer.

The protein resides in the cytoplasm. It carries out the reaction (2R)-3-phosphoglycerate + ATP = (2R)-3-phospho-glyceroyl phosphate + ADP. The protein operates within carbohydrate degradation; glycolysis; pyruvate from D-glyceraldehyde 3-phosphate: step 2/5. The protein is Phosphoglycerate kinase (pgk) of Buchnera aphidicola subsp. Acyrthosiphon pisum (strain APS) (Acyrthosiphon pisum symbiotic bacterium).